The following is a 234-amino-acid chain: Ubiquinone biosynthesis O-methyltransferase (234 aa).

Residues arginine 37, glycine 56, aspartate 77, and methionine 121 each coordinate S-adenosyl-L-methionine.

Belongs to the methyltransferase superfamily. UbiG/COQ3 family.

It catalyses the reaction a 3-demethylubiquinol + S-adenosyl-L-methionine = a ubiquinol + S-adenosyl-L-homocysteine + H(+). The catalysed reaction is a 3-(all-trans-polyprenyl)benzene-1,2-diol + S-adenosyl-L-methionine = a 2-methoxy-6-(all-trans-polyprenyl)phenol + S-adenosyl-L-homocysteine + H(+). It functions in the pathway cofactor biosynthesis; ubiquinone biosynthesis. Functionally, O-methyltransferase that catalyzes the 2 O-methylation steps in the ubiquinone biosynthetic pathway. The polypeptide is Ubiquinone biosynthesis O-methyltransferase (Aromatoleum aromaticum (strain DSM 19018 / LMG 30748 / EbN1) (Azoarcus sp. (strain EbN1))).